A 452-amino-acid chain; its full sequence is tRNA pseudouridine synthase Pus10 (452 aa).

Residues 71 to 200 (EMLRALAPSC…DGHVEIQIQP (130 aa)) enclose the THUMP domain. Catalysis depends on Asp-269, which acts as the Nucleophile. Tyr-335 and Tyr-406 together coordinate substrate.

It belongs to the pseudouridine synthase Pus10 family.

It carries out the reaction uridine(54) in tRNA = pseudouridine(54) in tRNA. It catalyses the reaction uridine(55) in tRNA = pseudouridine(55) in tRNA. In terms of biological role, responsible for synthesis of pseudouridine from uracil-54 and uracil-55 in the psi GC loop of transfer RNAs. This is tRNA pseudouridine synthase Pus10 from Methanothrix thermoacetophila (strain DSM 6194 / JCM 14653 / NBRC 101360 / PT) (Methanosaeta thermophila).